A 358-amino-acid polypeptide reads, in one-letter code: Probable aminomethyltransferase (358 aa).

Belongs to the GcvT family. The glycine cleavage system is composed of four proteins: P, T, L and H.

It catalyses the reaction N(6)-[(R)-S(8)-aminomethyldihydrolipoyl]-L-lysyl-[protein] + (6S)-5,6,7,8-tetrahydrofolate = N(6)-[(R)-dihydrolipoyl]-L-lysyl-[protein] + (6R)-5,10-methylene-5,6,7,8-tetrahydrofolate + NH4(+). In terms of biological role, the glycine cleavage system catalyzes the degradation of glycine. In Natronomonas pharaonis (strain ATCC 35678 / DSM 2160 / CIP 103997 / JCM 8858 / NBRC 14720 / NCIMB 2260 / Gabara) (Halobacterium pharaonis), this protein is Probable aminomethyltransferase.